Consider the following 115-residue polypeptide: Holo-[acyl-carrier-protein] synthase (115 aa).

Residues D6 and E51 each contribute to the Mg(2+) site.

This sequence belongs to the P-Pant transferase superfamily. AcpS family. The cofactor is Mg(2+).

It is found in the cytoplasm. The catalysed reaction is apo-[ACP] + CoA = holo-[ACP] + adenosine 3',5'-bisphosphate + H(+). Transfers the 4'-phosphopantetheine moiety from coenzyme A to a Ser of acyl-carrier-protein. In Campylobacter jejuni (strain RM1221), this protein is Holo-[acyl-carrier-protein] synthase.